Reading from the N-terminus, the 606-residue chain is Mannan endo-1,4-beta-mannosidase A (606 aa).

The signal sequence occupies residues 1 to 19 (MKSLNVILTLLSLIISVLS). The CBM6 domain maps to 22–140 (VYYEAEDGKL…WMWVDAFVIN (119 aa)). One can recognise a GH26 domain in the interval 164–458 (PAAKKLYDFL…FNHKTVMNMD (295 aa)). W285 is a substrate binding site. E318 functions as the Proton donor in the catalytic mechanism. Positions 323 and 378 each coordinate substrate. The Nucleophile role is filled by E406. The segment at 472 to 489 (SGSSHNGNSESNSNTGNS) is linker. 3 consecutive CBM10 domains span residues 491 to 527 (ECWS…CGIV), 530 to 566 (SCWS…CGIV), and 569 to 605 (SCWA…CGIL). Substrate is bound at residue W493.

It belongs to the glycosyl hydrolase 26 family.

The catalysed reaction is Random hydrolysis of (1-&gt;4)-beta-D-mannosidic linkages in mannans, galactomannans and glucomannans.. Hydrolyzes 1,4-beta linked polysaccharide backbones of mannans, one of the major hemicellulose components in hardwoods and softwoods. Shows very high activity against mannohexaose but not against mannopentaose and smaller mannooligosaccharides. The major products released from mannooligosaccharide hydrolysis are mannose and mannobiose. The reiterated 40 AA domain is involved in binding the cellulase-hemicellulase complex. The protein is Mannan endo-1,4-beta-mannosidase A (MANA) of Piromyces sp.